Reading from the N-terminus, the 153-residue chain is Large ribosomal subunit protein bL9 (153 aa).

Belongs to the bacterial ribosomal protein bL9 family.

Binds to the 23S rRNA. This is Large ribosomal subunit protein bL9 from Synechococcus sp. (strain JA-3-3Ab) (Cyanobacteria bacterium Yellowstone A-Prime).